The following is a 466-amino-acid chain: Ribulose bisphosphate carboxylase large chain (466 aa).

Residue Lys5 is modified to N6,N6,N6-trimethyllysine. Residues Asn114 and Thr164 each contribute to the substrate site. Catalysis depends on Lys166, which acts as the Proton acceptor. Lys168 serves as a coordination point for substrate. Mg(2+) is bound by residues Lys192, Asp194, and Glu195. Lys192 bears the N6-carboxylysine mark. Residue His285 is the Proton acceptor of the active site. Residues Arg286, His318, and Ser370 each coordinate substrate.

The protein belongs to the RuBisCO large chain family. Type I subfamily. In terms of assembly, heterohexadecamer of 8 large chains and 8 small chains; disulfide-linked. The disulfide link is formed within the large subunit homodimers. The cofactor is Mg(2+). The disulfide bond which can form in the large chain dimeric partners within the hexadecamer appears to be associated with oxidative stress and protein turnover.

It localises to the plastid. Its subcellular location is the chloroplast. It catalyses the reaction 2 (2R)-3-phosphoglycerate + 2 H(+) = D-ribulose 1,5-bisphosphate + CO2 + H2O. The catalysed reaction is D-ribulose 1,5-bisphosphate + O2 = 2-phosphoglycolate + (2R)-3-phosphoglycerate + 2 H(+). Functionally, ruBisCO catalyzes two reactions: the carboxylation of D-ribulose 1,5-bisphosphate, the primary event in carbon dioxide fixation, as well as the oxidative fragmentation of the pentose substrate in the photorespiration process. Both reactions occur simultaneously and in competition at the same active site. The polypeptide is Ribulose bisphosphate carboxylase large chain (Drosera capensis (Cape sundew)).